A 64-amino-acid chain; its full sequence is uncharacterized protein (64 aa).

The protein belongs to the orthopoxviruses VACWR006 protein family.

This is an uncharacterized protein from Vaccinia virus (strain Western Reserve) (VACV).